A 215-amino-acid polypeptide reads, in one-letter code: 5'-deoxynucleotidase YGK1 (215 aa).

The region spanning 58–164 (ISDHMYRMGL…VKDIDKYEML (107 aa)) is the HD domain. 7 residues coordinate a divalent metal cation: His-61, His-89, Asp-90, Glu-93, Asp-98, Ile-99, and Asp-159.

The protein belongs to the HDDC2 family. Homodimer. Requires Mn(2+) as cofactor. The cofactor is Co(2+). Mg(2+) is required as a cofactor.

It carries out the reaction a 2'-deoxyribonucleoside 5'-phosphate + H2O = a 2'-deoxyribonucleoside + phosphate. Catalyzes the dephosphorylation of the nucleoside 5'-monophosphates deoxyadenosine monophosphate (dAMP), deoxycytidine monophosphate (dCMP), deoxyguanosine monophosphate (dGMP) and deoxythymidine monophosphate (dTMP). The chain is 5'-deoxynucleotidase YGK1 from Saccharomyces cerevisiae (strain ATCC 204508 / S288c) (Baker's yeast).